The primary structure comprises 378 residues: Rhodopsin (378 aa).

Residues 1-53 lie on the Extracellular side of the membrane; that stretch reads MMSIASGPSHAAYTWASQGGGFGNQTVVDKVPPEMLHMVDAHWYQFPPMNPLW. An N-linked (GlcNAc...) asparagine glycan is attached at Asn24. Residues 54–78 form a helical membrane-spanning segment; the sequence is HALLGFVIGVLGVISVIGNGMVIYI. The Cytoplasmic segment spans residues 79–90; sequence FTTTKSLRTPSN. Residues 91–115 form a helical membrane-spanning segment; it reads LLVVNLAISDFLMMLCMSPAMVINC. Topologically, residues 116–130 are extracellular; that stretch reads YYETWVLGPLFCELY. A disulfide bond links Cys127 and Cys204. The helical transmembrane segment at 131–150 threads the bilayer; it reads GLAGSLFGCASIWTMTMIAF. Topologically, residues 151-169 are cytoplasmic; it reads DRYNVIVKGLSAKPMTING. The chain crosses the membrane as a helical span at residues 170–193; sequence ALIRILTIWFFTLAWTIAPMFGWN. The Extracellular segment spans residues 194–217; that stretch reads RYVPEGNMTACGTDYLTKDLFSRS. Asn200 carries an N-linked (GlcNAc...) asparagine glycan. Residues 218-245 traverse the membrane as a helical segment; that stretch reads YILIYSIFVYFTPLFLIIYSYFFIIQAV. The Cytoplasmic portion of the chain corresponds to 246–280; it reads AAHEKNMREQAKKMNVASLRSAENQSTSAECKLAK. Residues 281-304 form a helical membrane-spanning segment; the sequence is VALMTISLWFMAWTPYLVINYSGI. Residues 305 to 311 are Extracellular-facing; the sequence is FETTKIS. Residues 312 to 336 traverse the membrane as a helical segment; the sequence is PLFTIWGSLFAKANAVYNPIVYGIS. The residue at position 323 (Lys323) is an N6-(retinylidene)lysine. The Cytoplasmic portion of the chain corresponds to 337 to 378; that stretch reads HPKYRAALFQKFPSLACTTEPTGADTMSTTTTVTEGNEKPAA.

Belongs to the G-protein coupled receptor 1 family. Opsin subfamily. Post-translationally, phosphorylated on some or all of the serine and threonine residues present in the C-terminal region.

The protein resides in the membrane. Visual pigments are the light-absorbing molecules that mediate vision. They consist of an apoprotein, opsin, covalently linked to cis-retinal. The sequence is that of Rhodopsin from Camponotus atriceps (Florida carpenter ant).